The following is a 362-amino-acid chain: UDP-N-acetylglucosamine--N-acetylmuramyl-(pentapeptide) pyrophosphoryl-undecaprenol N-acetylglucosamine transferase (362 aa).

Residues 14 to 16 (TGG), Asn-122, Arg-163, Ser-190, and Gln-285 contribute to the UDP-N-acetyl-alpha-D-glucosamine site.

The protein belongs to the glycosyltransferase 28 family. MurG subfamily.

Its subcellular location is the cell inner membrane. The catalysed reaction is di-trans,octa-cis-undecaprenyl diphospho-N-acetyl-alpha-D-muramoyl-L-alanyl-D-glutamyl-meso-2,6-diaminopimeloyl-D-alanyl-D-alanine + UDP-N-acetyl-alpha-D-glucosamine = di-trans,octa-cis-undecaprenyl diphospho-[N-acetyl-alpha-D-glucosaminyl-(1-&gt;4)]-N-acetyl-alpha-D-muramoyl-L-alanyl-D-glutamyl-meso-2,6-diaminopimeloyl-D-alanyl-D-alanine + UDP + H(+). It participates in cell wall biogenesis; peptidoglycan biosynthesis. Cell wall formation. Catalyzes the transfer of a GlcNAc subunit on undecaprenyl-pyrophosphoryl-MurNAc-pentapeptide (lipid intermediate I) to form undecaprenyl-pyrophosphoryl-MurNAc-(pentapeptide)GlcNAc (lipid intermediate II). This Prochlorococcus marinus (strain MIT 9215) protein is UDP-N-acetylglucosamine--N-acetylmuramyl-(pentapeptide) pyrophosphoryl-undecaprenol N-acetylglucosamine transferase.